Consider the following 321-residue polypeptide: Protein stand still (321 aa).

Coiled coils occupy residues 74–103 (KLHE…RKKA) and 147–167 (KQEQ…KANL). The segment covering 146–162 (HKQEQEGATRKLEDSTS) has biased composition (basic and acidic residues). 2 disordered regions span residues 146–166 (HKQE…DKAN) and 227–248 (QVPP…MEDV). Low complexity predominate over residues 235–244 (SKSSGSLASS). Residues 272–292 (QRDVLQRLERSMAQISQELHC) adopt a coiled-coil conformation.

Germ cells specific. Expressed in all germ cells. During the first instar larvae, it is expressed in all germ cells of both sexes. In third instar larvae, it decreases in male germ cells while it remains in female germ cells. In adult ovary, it is expressed in cells of the germarium, including the stem cells. In the early previtellogenic stages, it is highly expressed in the nurse cells. During vitellogenesis, it is not translocated into the maturing egg. In testes, it is only expressed during some steps of male germline differentiation. At the apex testis, it is expressed at low level in stem cells and dividing spermatogonia, while in newly formed 16-cell cysts of primary spermatocytes, it is transiently but strongly expressed before vanishing during spermatocyte growth phase.

It is found in the nucleus. Its function is as follows. Essential in the female germline for proper survival, sex determination and differentiation. Participates in the transcriptional activation of Otu. Does not regulate the expression of Ovo. This is Protein stand still (stil) from Drosophila melanogaster (Fruit fly).